Reading from the N-terminus, the 364-residue chain is Aminomethyltransferase (364 aa).

It belongs to the GcvT family. As to quaternary structure, the glycine cleavage system is composed of four proteins: P, T, L and H.

It catalyses the reaction N(6)-[(R)-S(8)-aminomethyldihydrolipoyl]-L-lysyl-[protein] + (6S)-5,6,7,8-tetrahydrofolate = N(6)-[(R)-dihydrolipoyl]-L-lysyl-[protein] + (6R)-5,10-methylene-5,6,7,8-tetrahydrofolate + NH4(+). Its function is as follows. The glycine cleavage system catalyzes the degradation of glycine. The protein is Aminomethyltransferase of Shewanella loihica (strain ATCC BAA-1088 / PV-4).